The sequence spans 117 residues: MPLIPPPNPQKTYQIAVLALGLVLLLAFVLISDHSPKVGDHLHNLPFGGEYKDGTKTIKYFQRPNQHSLSKTLAKSHNTTIFLIILGLIGTLHGLHYFSNNRRISSSLHCVLCQNKH.

The Cytoplasmic segment spans residues 1-11 (MPLIPPPNPQK). The chain crosses the membrane as a helical span at residues 12–32 (TYQIAVLALGLVLLLAFVLIS). Residues 33–78 (DHSPKVGDHLHNLPFGGEYKDGTKTIKYFQRPNQHSLSKTLAKSHN) lie on the Lumenal side of the membrane. A helical membrane pass occupies residues 79–99 (TTIFLIILGLIGTLHGLHYFS). The Cytoplasmic segment spans residues 100-117 (NNRRISSSLHCVLCQNKH).

This sequence belongs to the Tymovirales TGBp2 protein family.

It is found in the host endoplasmic reticulum membrane. Plays a role in viral cell-to-cell propagation, by facilitating genome transport to neighboring plant cells through plasmosdesmata,. This chain is Movement protein TGB2, found in Trifolium (WCMV).